Consider the following 156-residue polypeptide: Cyanate hydratase (156 aa).

Catalysis depends on residues Arg96, Glu99, and Ser122.

The protein belongs to the cyanase family.

The enzyme catalyses cyanate + hydrogencarbonate + 3 H(+) = NH4(+) + 2 CO2. Functionally, catalyzes the reaction of cyanate with bicarbonate to produce ammonia and carbon dioxide. The protein is Cyanate hydratase of Burkholderia lata (strain ATCC 17760 / DSM 23089 / LMG 22485 / NCIMB 9086 / R18194 / 383).